Here is a 336-residue protein sequence, read N- to C-terminus: Glucokinase (336 aa).

13–18 (ADVGGT) serves as a coordination point for ATP.

It belongs to the bacterial glucokinase family.

The protein localises to the cytoplasm. It carries out the reaction D-glucose + ATP = D-glucose 6-phosphate + ADP + H(+). This chain is Glucokinase, found in Cupriavidus metallidurans (strain ATCC 43123 / DSM 2839 / NBRC 102507 / CH34) (Ralstonia metallidurans).